A 1430-amino-acid polypeptide reads, in one-letter code: rRNA biogenesis protein RRP5 (1430 aa).

6 S1 motif domains span residues 74–160 (DMLV…LSLK), 176–238 (GFIF…CTCV), 261–329 (GSIV…LTLN), 447–511 (GDLV…VSNR), 531–592 (GNVY…LTLP), and 697–771 (QVGD…VSAK). The segment at 1041–1145 (KITNGQKKTQ…AKEKAKAEIK (105 aa)) is disordered. A compositionally biased stretch (polar residues) spans 1043–1053 (TNGQKKTQPLT). 2 stretches are compositionally biased toward basic and acidic residues: residues 1057-1082 (VKEK…KSET) and 1135-1145 (SAKEKAKAEIK). A coiled-coil region spans residues 1119–1157 (LNVAETQKNAAKKKRLSAKEKAKAEIKEEQRLREIEERN). 6 HAT repeats span residues 1161–1193 (KARL…FLLS), 1195–1232 (TEIE…MELV), 1265–1297 (KRKD…AYFW), 1299–1333 (GKSD…LYAK), 1335–1367 (DNND…MLIK), and 1369–1404 (GLID…LEEN).

It is found in the nucleus. Its subcellular location is the nucleolus. In terms of biological role, involved in rRNA processing or maturation during ribosome biogenesis. The sequence is that of rRNA biogenesis protein RRP5 from Drosophila melanogaster (Fruit fly).